Reading from the N-terminus, the 621-residue chain is Growth factor receptor-bound protein 10 (621 aa).

Composition is skewed to polar residues over residues 1 to 23 and 33 to 59; these read MNND…SDTD and HASN…QRSQ. Residues 1–118 form a disordered region; that stretch reads MNNDINSSVE…PSQPPAKHCG (118 aa). Phosphoserine occurs at positions 50 and 96. Pro residues predominate over residues 95–112; that stretch reads GSPPSVAPSSLPPPPSQP. Positions 194-278 constitute a Ras-associating domain; the sequence is LRKDVKVFSE…SKFLFRKNYA (85 aa). Residues 318–427 enclose the PH domain; it reads CPEIQGFLQV…WMTAFRLLKY (110 aa). Residue Ser-455 is modified to Phosphoserine; by MTOR and PKB/AKT1. Residues Ser-458 and Ser-503 each carry the phosphoserine modification. Positions 520–601 constitute an SH2 domain; it reads WFHGRISREE…SDLIQLVDFY (82 aa).

It belongs to the GRB7/10/14 family. Interacts with ligand-activated tyrosine kinase receptors, including FGFR1, INSR, IGF1R, MET and PDGFRB in a phosphotyrosine-dependent manner through the SH2 domain. Poorly binds to the EGFR. Directly interacts with MAP3K14/NIK and is recruited to the EGFR-ERBB2 complex. Interacts with GIGYF1/PERQ1 and GIGYF2/TNRC15. When unphosphorylated, interacts with AKT1 and when phosphorylated with YWHAE/14-3-3 epsilon. Interacts with NEDD4. Interacts with LRP6, thus interfering with the binding of AXIN1 to LRP6. Binds to activated NRAS. In terms of processing, phosphorylated on serine residues upon EGF, FGF and PDGF stimulation. Widely expressed.

The protein localises to the cytoplasm. Its activity is regulated as follows. Phosphorylation by mTORC1 stabilizes and activates GRB10 constituting a feedback pathway by which mTORC1 inhibits INSR-dependent signaling. Adapter protein which modulates coupling of a number of cell surface receptor kinases with specific signaling pathways. Binds to, and suppress signals from, activated receptors tyrosine kinases, including the insulin (INSR) and insulin-like growth factor (IGF1R) receptors. The inhibitory effect can be achieved by 2 mechanisms: interference with the signaling pathway and increased receptor degradation. Delays and reduces AKT1 phosphorylation in response to insulin stimulation. Blocks association between INSR and IRS1 and IRS2 and prevents insulin-stimulated IRS1 and IRS2 tyrosine phosphorylation. Recruits NEDD4 to IGF1R, leading to IGF1R ubiquitination, increased internalization and degradation by both the proteasomal and lysosomal pathways. A similar role in the mediation of ubiquitination also has been suggested with INSR. Negatively regulates Wnt signaling by interacting with LRP6 intracellular portion and interfering with the binding of AXIN1 to LRP6. Positive regulator of the KDR/VEGFR-2 signaling pathway. May inhibit NEDD4-mediated degradation of KDR/VEGFR-2. This Mus musculus (Mouse) protein is Growth factor receptor-bound protein 10 (Grb10).